A 295-amino-acid chain; its full sequence is MWFKRIGLFLLTNILVVVTISIVTSVLGIGPYLDANGINLSSLLVFCFLWGMGGAFVSLLLSKFMAKMMMGVQVIDPRSASGAERELYSRVERLARTANLPMPEVGIYHSPEVNAFATGPSKSSSLVAVSSGLLQTMDNAEVEGVLAHELAHVANGDMVTMTLIQGVVNAFVMFFSRIISYALSTMVKDELQYTVRLIANIVLSILFSILGSIIVAYFSRTREYRADAGGAKLAGRQNMIAALEKLKRTFDAPEDERGREALATMKISGHNKWMALFSTHPPLEARIAALKNSGY.

The next 2 helical transmembrane spans lie at 6–26 (IGLF…VTSV) and 40–60 (LSSL…VSLL). Histidine 148 serves as a coordination point for Zn(2+). Glutamate 149 is an active-site residue. Position 152 (histidine 152) interacts with Zn(2+). A run of 2 helical transmembrane segments spans residues 163–183 (LIQG…SYAL) and 198–218 (IANI…VAYF). Glutamate 223 serves as a coordination point for Zn(2+).

Belongs to the peptidase M48B family. Requires Zn(2+) as cofactor.

Its subcellular location is the cell inner membrane. The chain is Protease HtpX homolog from Leptospira interrogans serogroup Icterohaemorrhagiae serovar copenhageni (strain Fiocruz L1-130).